The following is a 622-amino-acid chain: MQAHLSHQPCWSSLPSPSVREAASMYGTAVAIFLVILVAALRGSEPPESPFPYHIPLDPEGILELSWNVSYVQEIIHFQLQVQGLRAGVLFGMSDRGEMENADLIMLWTDGDRAYFADAWSDRKGQIHLDSQQDYQLLQAQRTRDGLSLLFKRPFVTCDPKDYVIEDDTVHLVYGILEEPFQSLEAINTSGLHTGLQRVQLLKSEVPTPSMPEDVQTMDIRAPDILIPDNETTYWCYITELPPRFPRHHIIMYEAIVTEGNEALVHHMEVFQCAAESEDFPQFNGPCDSKMKPDRLNYCRHVLAAWALGAKAFYYPKEAGVPFGGPGSSPFLRLEVHYHNPRKIQGRQDSSGIRLHYTATLRRYDAGIMELGLVYTPLMAIPPQETAFVLTGYCTDKCTQMALQDSGIHIFASQLHTHLTGRKVVTVLARDGQERKVVNRDNHYSPHFQEIRMLKKVVTVYPGDVLITSCTYNTENKTLATVGGFGILEEMCVNYVHYYPQTELELCKSAVDDGFLQKYFHMVNRFSSEEVCTCPQASVPQQFSSVPWNSFNRDMLKALYDYAPISMHCNKTSAVRFPGEWNLQPLPKITSTLEEPTPRCPIRQTQSPANPTVPITTEADAE.

The Cytoplasmic segment spans residues 1–20 (MQAHLSHQPCWSSLPSPSVR). A helical; Signal-anchor for type II membrane protein membrane pass occupies residues 21–41 (EAASMYGTAVAIFLVILVAAL). Over 42–621 (RGSEPPESPF…TVPITTEADA (580 aa)) the chain is Intragranular. The 117-residue stretch at 61 to 177 (GILELSWNVS…DTVHLVYGIL (117 aa)) folds into the DOMON domain. N-linked (GlcNAc...) asparagine glycosylation is found at N68 and N188. Disulfide bonds link C158/C600, C236/C287, C273/C299, C394/C507, C398/C569, and C470/C492. Residue Y234 is part of the active site. Cu(2+) contacts are provided by H266 and H267. H337 serves as a coordination point for Cu(2+). The residue at position 350 (S350) is a Phosphoserine; by CaMK. H416 is an active-site residue. Residues H416 and H418 each coordinate Cu(2+). A glycan (N-linked (GlcNAc...) asparagine) is linked at N476. M491 contacts Cu(2+). N570 is a glycosylation site (N-linked (GlcNAc...) asparagine). Residues 594 to 622 (EEPTPRCPIRQTQSPANPTVPITTEADAE) are disordered. The span at 603 to 615 (RQTQSPANPTVPI) shows a compositional bias: polar residues.

This sequence belongs to the copper type II ascorbate-dependent monooxygenase family. As to quaternary structure, homotetramer; composed of two disulfide-linked dimers. It depends on Cu(2+) as a cofactor. In terms of processing, proteolytic cleavage after the membrane-anchor leads to the release of the soluble form. N-glycosylated. Detected in adrenal gland secretory granules (at protein level). Detected in adrenal gland.

It localises to the cytoplasmic vesicle. The protein localises to the secretory vesicle lumen. The protein resides in the secretory vesicle. It is found in the chromaffin granule lumen. Its subcellular location is the secretory vesicle membrane. It localises to the chromaffin granule membrane. It catalyses the reaction dopamine + 2 L-ascorbate + O2 = (R)-noradrenaline + 2 monodehydro-L-ascorbate radical + H2O. Its pathway is catecholamine biosynthesis; (R)-noradrenaline biosynthesis; (R)-noradrenaline from dopamine: step 1/1. In terms of biological role, catalyzes the hydroxylation of dopamine to noradrenaline (also known as norepinephrine), and is thus vital for regulation of these neurotransmitters. This Mus musculus (Mouse) protein is Dopamine beta-hydroxylase (Dbh).